We begin with the raw amino-acid sequence, 95 residues long: Alpha-bungarotoxin isoform V31 (95 aa).

Positions 1–21 (MKTLLLTLVVVTIVCLDLGYT) are cleaved as a signal peptide. 5 disulfides stabilise this stretch: Cys24–Cys44, Cys37–Cys65, Cys50–Cys54, Cys69–Cys80, and Cys81–Cys86.

Belongs to the three-finger toxin family. Long-chain subfamily. Type II alpha-neurotoxin sub-subfamily. Monomer in solution, homodimer in crystal state. As to expression, expressed by the venom gland.

It localises to the secreted. Binds with high affinity to muscular (alpha-1/CHRNA1) and neuronal (alpha-7/CHRNA7) nicotinic acetylcholine receptor (nAChR) and inhibits acetylcholine from binding to the receptor, thereby impairing neuromuscular and neuronal transmission. This Bungarus multicinctus (Many-banded krait) protein is Alpha-bungarotoxin isoform V31.